A 292-amino-acid chain; its full sequence is tRNA pseudouridine synthase B (292 aa).

Asp-38 serves as the catalytic Nucleophile.

It belongs to the pseudouridine synthase TruB family. Type 1 subfamily.

The catalysed reaction is uridine(55) in tRNA = pseudouridine(55) in tRNA. In terms of biological role, responsible for synthesis of pseudouridine from uracil-55 in the psi GC loop of transfer RNAs. This is tRNA pseudouridine synthase B from Streptococcus pneumoniae serotype 2 (strain D39 / NCTC 7466).